Consider the following 72-residue polypeptide: Translation initiation factor IF-1 (72 aa).

An S1-like domain is found at 1 to 72; sequence MAKDDVIEVE…TRGRITYRYK (72 aa). Position 60 is a phosphotyrosine (tyrosine 60).

The protein belongs to the IF-1 family. In terms of assembly, component of the 30S ribosomal translation pre-initiation complex which assembles on the 30S ribosome in the order IF-2 and IF-3, IF-1 and N-formylmethionyl-tRNA(fMet); mRNA recruitment can occur at any time during PIC assembly.

The protein resides in the cytoplasm. In terms of biological role, one of the essential components for the initiation of protein synthesis. Stabilizes the binding of IF-2 and IF-3 on the 30S subunit to which N-formylmethionyl-tRNA(fMet) subsequently binds. Helps modulate mRNA selection, yielding the 30S pre-initiation complex (PIC). Upon addition of the 50S ribosomal subunit IF-1, IF-2 and IF-3 are released leaving the mature 70S translation initiation complex. This Geobacillus thermodenitrificans (strain NG80-2) protein is Translation initiation factor IF-1.